Consider the following 157-residue polypeptide: Methylglyoxal synthase (157 aa).

Residues 1–157 form the MGS-like domain; the sequence is MSKVKNIAVV…DFSSYTQRKL (157 aa). Substrate contacts are provided by residues histidine 12, lysine 16, 38–41, and 71–72; these read TGTT and SG. Catalysis depends on aspartate 77, which acts as the Proton donor/acceptor. Substrate is bound at residue histidine 104.

This sequence belongs to the methylglyoxal synthase family.

The enzyme catalyses dihydroxyacetone phosphate = methylglyoxal + phosphate. Its function is as follows. Catalyzes the formation of methylglyoxal from dihydroxyacetone phosphate. This Maridesulfovibrio salexigens (strain ATCC 14822 / DSM 2638 / NCIMB 8403 / VKM B-1763) (Desulfovibrio salexigens) protein is Methylglyoxal synthase.